Here is a 312-residue protein sequence, read N- to C-terminus: D-alanine--D-alanine ligase (312 aa).

The ATP-grasp domain maps to 103-303 (KQQLVPHGIR…YADLVQAIVD (201 aa)). 130–186 (MPRPYVLKPVNEGSSVGVAIIKERDNHGVPIHRDSHGPWQTFATLLAEPFIRGRELT) serves as a coordination point for ATP. Mg(2+) contacts are provided by aspartate 254, glutamate 270, and asparagine 272.

The protein belongs to the D-alanine--D-alanine ligase family. It depends on Mg(2+) as a cofactor. Requires Mn(2+) as cofactor.

The protein localises to the cytoplasm. The catalysed reaction is 2 D-alanine + ATP = D-alanyl-D-alanine + ADP + phosphate + H(+). The protein operates within cell wall biogenesis; peptidoglycan biosynthesis. Cell wall formation. This Rhizorhabdus wittichii (strain DSM 6014 / CCUG 31198 / JCM 15750 / NBRC 105917 / EY 4224 / RW1) (Sphingomonas wittichii) protein is D-alanine--D-alanine ligase.